The primary structure comprises 525 residues: Transcriptional regulatory protein TOD6 (525 aa).

The interval 22–82 (GFSILSKHPH…NNPSSWDPSD (61 aa)) is disordered. Over residues 35-47 (LVHSHSLSHTNAK) the composition is skewed to polar residues. Positions 61–71 (STNKEEAESLK) are enriched in basic and acidic residues. One can recognise an HTH myb-type domain in the interval 67 to 124 (AESLKKNNPSSWDPSDDIKLRHLKEIKNLGWKEIAHHFPNRTPNACQFRWRRLKSGNL). The H-T-H motif DNA-binding region spans 97–120 (WKEIAHHFPNRTPNACQFRWRRLK). At Ser-280 the chain carries Phosphoserine. The tract at residues 283–308 (PSTQIPHSTTKTRKNSHSVISSRRSS) is disordered. The segment covering 299–308 (HSVISSRRSS) has biased composition (low complexity). 3 positions are modified to phosphoserine: Ser-333, Ser-341, and Ser-366. The interval 451 to 510 (TNEGCKDEEEEDDIDPLHKENGINTPSQQSQNYGMLEAKHDNPKSSELSSMTSANDIRNE) is disordered. Polar residues-rich tracts occupy residues 472-483 (GINTPSQQSQNY) and 495-506 (SSELSSMTSAND).

It belongs to the DOT6 family. Component of the RPD3C(L) complex composed of at least ASH1, CTI6, DEP1, DOT6, PHO23, RPD3, RXT2, RXT3, SAP30, SDS3, SIN3, TOD6; UME1 and UME6.

Its subcellular location is the cytoplasm. It localises to the nucleus. Functionally, component of the RPD3 histone deacetylase complex RPD3C(L) responsible for the deacetylation of lysine residues on the N-terminal part of the core histones (H2A, H2B, H3 and H4). Histone deacetylation gives a tag for epigenetic repression and plays an important role in transcriptional regulation, cell cycle progression and developmental events. TOD6 binds to sequences containing the core CGATG, which resembles the PAC (Polymerase A and C) motif. The sequence is that of Transcriptional regulatory protein TOD6 (TOD6) from Saccharomyces cerevisiae (strain ATCC 204508 / S288c) (Baker's yeast).